The chain runs to 300 residues: Ribosomal protein bS6--L-glutamate ligase (300 aa).

One can recognise an ATP-grasp domain in the interval 104 to 287 (MQLLARQGID…IAGKMIRWIE (184 aa)). ATP is bound by residues Lys-141, 178–179 (EY), Asp-187, and 211–213 (RSN). Positions 248, 260, and 262 each coordinate Mg(2+). Asp-248, Glu-260, and Asn-262 together coordinate Mn(2+).

Belongs to the RimK family. It depends on Mg(2+) as a cofactor. The cofactor is Mn(2+).

An L-glutamate ligase that catalyzes the ATP-dependent post-translational addition of glutamate residues to the C-terminus of ribosomal protein bS6 (RpsF). Is also able to catalyze the synthesis of poly-alpha-glutamate in vitro, via ATP hydrolysis from unprotected glutamate as substrate. The number of glutamate residues added to either RpsF or to poly-alpha-glutamate changes with pH. The polypeptide is Ribosomal protein bS6--L-glutamate ligase (Shigella dysenteriae serotype 1 (strain Sd197)).